The chain runs to 144 residues: Probable low molecular weight protein-tyrosine-phosphatase AmsI (144 aa).

C9 acts as the Nucleophile in catalysis. R15 is an active-site residue. D115 (proton donor) is an active-site residue.

This sequence belongs to the low molecular weight phosphotyrosine protein phosphatase family.

It carries out the reaction O-phospho-L-tyrosyl-[protein] + H2O = L-tyrosyl-[protein] + phosphate. In terms of biological role, may function as a phosphatase required for amylovoran (an exopolysaccharide that functions as a virulence factor) production. This chain is Probable low molecular weight protein-tyrosine-phosphatase AmsI (amsI), found in Erwinia amylovora (Fire blight bacteria).